A 317-amino-acid chain; its full sequence is mRNA 3'-end-processing protein yth-1 (317 aa).

The tract at residues 1–20 (MATTTQTTTNSLPSGAGGPQ) is disordered. C3H1-type zinc fingers lie at residues 51–78 (PADRPICKAYASGNCPLKSHCPERHVTA), 93–120 (GFGSLVCKHWLRGLCKKGESCEFLHEYN), 121–149 (LRKMPECNFFVRNGYCSNGDECLYLHIDP), 150–177 (LSRLPPCPHYERGFCPLGPRCDKKHFRR), and 179–202 (LCLYYLAGFCPDGKGCKEGAHPRW). Positions 202-217 (WTADKDMEKPRAKGEG) are enriched in basic and acidic residues. The segment at 202–317 (WTADKDMEKP…GRGGFRGKGH (116 aa)) is disordered. The segment covering 223 to 237 (QQQQQQQQQQHMGDA) has biased composition (low complexity). A compositionally biased stretch (basic and acidic residues) spans 253 to 288 (YMDRERERDRDNREREMMMQGRDRDGGGHDRHKDRF). Residues 289–301 (GGGGGGGGGGRGR) are compositionally biased toward gly residues. Residues 302 to 317 (GGWRGRGRGGFRGKGH) show a composition bias toward basic residues.

This sequence belongs to the CPSF4/YTH1 family.

The protein localises to the nucleus. In terms of biological role, component of the cleavage factor I (CF I) involved in pre-mRNA 3'-end processing. In Neurospora crassa (strain ATCC 24698 / 74-OR23-1A / CBS 708.71 / DSM 1257 / FGSC 987), this protein is mRNA 3'-end-processing protein yth-1 (yth-1).